The primary structure comprises 421 residues: UDP-N-acetylglucosamine 1-carboxyvinyltransferase (421 aa).

Residue 22-23 (KN) coordinates phosphoenolpyruvate. Residue R93 coordinates UDP-N-acetyl-alpha-D-glucosamine. Catalysis depends on C117, which acts as the Proton donor. Residue C117 is modified to 2-(S-cysteinyl)pyruvic acid O-phosphothioketal. UDP-N-acetyl-alpha-D-glucosamine-binding positions include 122 to 126 (RPVDL), D308, and I330.

This sequence belongs to the EPSP synthase family. MurA subfamily.

The protein resides in the cytoplasm. It carries out the reaction phosphoenolpyruvate + UDP-N-acetyl-alpha-D-glucosamine = UDP-N-acetyl-3-O-(1-carboxyvinyl)-alpha-D-glucosamine + phosphate. It functions in the pathway cell wall biogenesis; peptidoglycan biosynthesis. Functionally, cell wall formation. Adds enolpyruvyl to UDP-N-acetylglucosamine. In Pseudomonas fluorescens (strain SBW25), this protein is UDP-N-acetylglucosamine 1-carboxyvinyltransferase.